The sequence spans 1842 residues: Plexin-B2 (1842 aa).

Residues 1 to 19 form the signal peptide; the sequence is MALPLWALTFLGLTGLGLS. A Sema domain is found at 20 to 468; the sequence is LRSRKPESFR…TQDKVFRLPV (449 aa). Over 20–1201 the chain is Extracellular; it reads LRSRKPESFR…EYDTRASDVP (1182 aa). Cystine bridges form between C78-C87 and C112-C120. N-linked (GlcNAc...) asparagine glycosylation is found at N127 and N242. Cystine bridges form between C250-C366, C266-C313, and C331-C353. N-linked (GlcNAc...) asparagine glycans are attached at residues N393 and N451. 5 cysteine pairs are disulfide-bonded: C471-C488, C477-C520, C480-C497, C491-C503, and C557-C576. The N-linked (GlcNAc...) asparagine glycan is linked to N798. IPT/TIG domains follow at residues 806–895, 898–982, and 986–1095; these read PVIT…QFTY, PQPL…SFTY, and PMIR…VFEY. 3 N-linked (GlcNAc...) asparagine glycosylation sites follow: N919, N1053, and N1072. The chain crosses the membrane as a helical span at residues 1202–1222; that stretch reads LSLILPLVMVPMVFIIVVSIY. Over 1223 to 1842 the chain is Cytoplasmic; sequence CYWRKSQQAE…AALENKVTDL (620 aa). Residues S1240, S1248, and S1574 each carry the phosphoserine modification.

The protein belongs to the plexin family. As to quaternary structure, monomer, and heterodimer with PLXNB1. Interacts with MET, ARHGEF11 and ARHGEF12. May also interact with MST1R. In terms of tissue distribution, detected in macrophages from spleen and bone marrow (at protein level). Detected in granule cells in the developing cerebellum, dentate gyrus and olfactory bulb. Expressed in neurons and glia in the developing hippocampus.

It localises to the cell membrane. Functionally, cell surface receptor for SEMA4C, SEMA4D and SEMA4G that plays an important role in cell-cell signaling. Plays a role in glutamatergic synapse development and is required for SEMA4A-mediated excitatory synapse development. Binding to class 4 semaphorins promotes downstream activation of RHOA and phosphorylation of ERBB2 at 'Tyr-1248'. Also acts as a cell surface receptor for angiogenin (ANG); promoting ANG endocytosis and translocation to the cytoplasm or nucleus. Required for normal differentiation and migration of neuronal cells during brain corticogenesis and for normal embryonic brain development. Regulates the migration of cerebellar granule cells in the developing brain. Plays a role in RHOA activation and subsequent changes of the actin cytoskeleton. Plays a role in axon guidance, invasive growth and cell migration. May modulate the activity of RAC1 and CDC42. Down-regulates macrophage migration in wound-healing assays (in vitro). The protein is Plexin-B2 of Mus musculus (Mouse).